Consider the following 170-residue polypeptide: Cytochrome c-type biogenesis protein CcmE (170 aa).

Residues methionine 1–arginine 7 are Cytoplasmic-facing. Residues leucine 8 to alanine 28 traverse the membrane as a helical; Signal-anchor for type II membrane protein segment. The Periplasmic portion of the chain corresponds to leucine 29 to glutamine 170. Histidine 122 and tyrosine 126 together coordinate heme. Over residues lysine 137–glycine 146 the composition is skewed to basic and acidic residues. The interval lysine 137–glutamine 170 is disordered.

This sequence belongs to the CcmE/CycJ family.

Its subcellular location is the cell inner membrane. Its function is as follows. Heme chaperone required for the biogenesis of c-type cytochromes. Transiently binds heme delivered by CcmC and transfers the heme to apo-cytochromes in a process facilitated by CcmF and CcmH. In Bradyrhizobium sp. (strain BTAi1 / ATCC BAA-1182), this protein is Cytochrome c-type biogenesis protein CcmE.